The following is an 850-amino-acid chain: Pentatricopeptide repeat-containing protein At3g49170, chloroplastic (850 aa).

A chloroplast-targeting transit peptide spans 1-50; it reads MAMISFSFPSPAKLPIKSQPSVSNRINVADRLILRHLNAGDLRGAVSALD. PPR repeat units lie at residues 61-95, 96-130, 131-164, 165-199, 201-232, 233-267, 268-302, 303-334, 335-370, 372-406, 407-437, 438-472, 473-507, 508-538, 539-573, 574-609, and 610-640; these read DSVT…DIEP, DSVL…GKRD, VVSW…GLVP, NDYC…GHFE, DVCV…MSEL, NVVT…GFES, DKFT…GLVD, DVEC…MEDH, SVMS…GHVE, NHFT…GLAS, NSSV…LSEK, NLVS…ELGV, SAFT…GLSC, NQPV…MENR, NVIS…GVKP, NEVT…KIKP, and KMEH…MPFQ. The type E motif stretch occupies residues 645 to 720; sequence VWRTFLGACR…EGGCSWIEVG (76 aa). A type E(+) motif region spans residues 721-751; that stretch reads DKIHKFYVGDTAHPNAHQIYDELDRLITEIK. The type DYW motif stretch occupies residues 752-850; the sequence is RCGYVPDTDL…DGKCSCNDYW (99 aa).

The protein belongs to the PPR family. PCMP-H subfamily.

The protein resides in the plastid. Its subcellular location is the chloroplast. In terms of biological role, may play a role in embryogenesis. The chain is Pentatricopeptide repeat-containing protein At3g49170, chloroplastic (EMB2261) from Arabidopsis thaliana (Mouse-ear cress).